The chain runs to 288 residues: tRNA dimethylallyltransferase (288 aa).

2 to 9 (GPTAAGKS) is a binding site for ATP. Substrate is bound at residue 4 to 9 (TAAGKS). The segment at 27 to 30 (DSMQ) is interaction with substrate tRNA.

This sequence belongs to the IPP transferase family. As to quaternary structure, monomer. Mg(2+) is required as a cofactor.

The enzyme catalyses adenosine(37) in tRNA + dimethylallyl diphosphate = N(6)-dimethylallyladenosine(37) in tRNA + diphosphate. Catalyzes the transfer of a dimethylallyl group onto the adenine at position 37 in tRNAs that read codons beginning with uridine, leading to the formation of N6-(dimethylallyl)adenosine (i(6)A). The chain is tRNA dimethylallyltransferase from Frankia alni (strain DSM 45986 / CECT 9034 / ACN14a).